The following is a 241-amino-acid chain: Guanosine phosphorylase (241 aa).

This sequence belongs to the PNP/UDP phosphorylase family.

It catalyses the reaction guanosine + phosphate = alpha-D-ribose 1-phosphate + guanine. The enzyme catalyses a purine D-ribonucleoside + phosphate = a purine nucleobase + alpha-D-ribose 1-phosphate. It carries out the reaction inosine + phosphate = alpha-D-ribose 1-phosphate + hypoxanthine. The catalysed reaction is adenosine + phosphate = alpha-D-ribose 1-phosphate + adenine. Its activity is regulated as follows. Activity is higher at low KCl concentrations. Phosphorylase involved in the non-carboxylating pentose bisphosphate pathway, a nucleoside degradation pathway present in some halophilic archaea. Catalyzes the phosphorolytic cleavage of guanosine to guanine and ribose-1-phosphate (R1P). Exhibits the highest activity toward guanosine, but also shows lower activity against inosine and adenosine. The chain is Guanosine phosphorylase from Halorubrum lacusprofundi (strain ATCC 49239 / DSM 5036 / JCM 8891 / ACAM 34).